A 318-amino-acid polypeptide reads, in one-letter code: Pantothenate kinase (318 aa).

Gly-96–Ser-103 provides a ligand contact to ATP.

It belongs to the prokaryotic pantothenate kinase family.

The protein localises to the cytoplasm. It carries out the reaction (R)-pantothenate + ATP = (R)-4'-phosphopantothenate + ADP + H(+). It participates in cofactor biosynthesis; coenzyme A biosynthesis; CoA from (R)-pantothenate: step 1/5. The polypeptide is Pantothenate kinase (Bradyrhizobium diazoefficiens (strain JCM 10833 / BCRC 13528 / IAM 13628 / NBRC 14792 / USDA 110)).